Here is a 546-residue protein sequence, read N- to C-terminus: Parathyroid hormone 2 receptor (546 aa).

The N-terminal stretch at 1 to 24 is a signal peptide; sequence MAWLETFTYICGWLILSSCLLVRA. The Extracellular segment spans residues 27–143; that stretch reads DSDGTITIEE…GKQEFFESLY (117 aa). Residues N51, N106, N116, and N121 are each glycosylated (N-linked (GlcNAc...) asparagine). Residues 144–167 form a helical membrane-spanning segment; that stretch reads ILYTVGYSISFGSLAVAILIIGYF. Topologically, residues 168 to 174 are cytoplasmic; sequence RRLHCTR. A helical transmembrane segment spans residues 175-194; the sequence is NYIHLHLFVSFMLRAMSIFV. Over 195 to 235 the chain is Extracellular; it reads KDRVAQAHLGVEALQSLVMQGDLQNFIGGPSVDKSQYVGCK. A helical transmembrane segment spans residues 236-258; that stretch reads IAVVMFIYFLATNYYWILVEGLY. The Cytoplasmic portion of the chain corresponds to 259 to 273; it reads LHNLIFVSFFSDTKY. Residues 274–295 traverse the membrane as a helical segment; sequence LWGFISIGWGFPAVFVVAWAVA. Over 296–313 the chain is Extracellular; sequence RATLADTRCWELSAGDRW. Residues 314 to 334 traverse the membrane as a helical segment; it reads IYQAPILAAIGLNFILFLNTV. The Cytoplasmic segment spans residues 335-361; the sequence is RVLATKIWETNAVGHDMRKQYRKLAKS. The chain crosses the membrane as a helical span at residues 362 to 380; the sequence is TLVLVLVFGVHYIVFVCQP. Residues 381–391 lie on the Extracellular side of the membrane; that stretch reads HSFSGLWWEIR. The helical transmembrane segment at 392-414 threads the bilayer; sequence MHCELFFNSFQGFFVSIVYCYCN. Residues 415–546 are Cytoplasmic-facing; sequence GEVQAEVKKM…EGCKGETHPI (132 aa). The interval 497–546 is disordered; that stretch reads SEQDCQTHSPPEETKEGHRRQGDDSPVMESSRPVAFTLDTEGCKGETHPI. 2 stretches are compositionally biased toward basic and acidic residues: residues 506–519 and 537–546; these read PPEETKEGHRRQGD and EGCKGETHPI.

It belongs to the G-protein coupled receptor 2 family. Binds to TIPF39/TIP39.

The protein localises to the cell membrane. Its function is as follows. This is a specific receptor for parathyroid hormone. The activity of this receptor is mediated by G proteins which activate adenylyl cyclase. PTH2R may be responsible for PTH effects in a number of physiological systems. It may play a significant role in pancreatic function. PTH2R presence in neurons indicates that it may function as a neurotransmitter receptor. The chain is Parathyroid hormone 2 receptor (Pth2r) from Mus musculus (Mouse).